A 1609-amino-acid chain; its full sequence is Chitin synthase 5 (1609 aa).

Disordered stretches follow at residues 1–188, 248–280, and 294–320; these read MNPF…DRER, SGLG…GRDE, and VSLR…ESKT. Topologically, residues 1-326 are cytoplasmic; the sequence is MNPFESLPDA…ESKTSRIAPG (326 aa). The span at 34–44 shows a compositional bias: polar residues; it reads PGSTGRPQNPI. Residues 61–82 are compositionally biased toward low complexity; the sequence is PQQQQQQQQQQQQQQQRSQQPF. Over residues 100–111 the composition is skewed to polar residues; that stretch reads AYLNSTSSQPTQ. Residues 134–146 show a composition bias toward basic and acidic residues; sequence DSVKSYGDDKRSI. Over residues 147 to 163 the composition is skewed to polar residues; sequence NDPNSSSTALTQVNSLD. Over residues 253–267 the composition is skewed to low complexity; sequence TGPTNVPPGGLGRAP. Residues 307–320 show a composition bias toward basic and acidic residues; that stretch reads PSKEVPRDLGESKT. The helical transmembrane segment at 327-347 threads the bilayer; the sequence is PVGGWMIYCYILTICCPGPFL. Topologically, residues 348 to 364 are extracellular; sequence RIFGIRTPEQQRAWREK. A helical membrane pass occupies residues 365-385; it reads MGLIGIITLIMAAVGFLTFGF. Topologically, residues 386–624 are cytoplasmic; it reads TQTVCGQQPD…ASKVELYLSL (239 aa). The helical transmembrane segment at 625-645 threads the bilayer; it reads VFIIGVVAIKFFMAVMFGWFI. Residues 646–1176 are Extracellular-facing; the sequence is SWRLGNYANE…MRFVVFMELT (531 aa). Asn-654 carries an N-linked (GlcNAc...) asparagine glycan. The disordered stretch occupies residues 729–767; that stretch reads GVASPLGGSPPGSPSVAGGRSSASLAPAHSRRSSFSGSP. Residues 742 to 752 are compositionally biased toward low complexity; it reads PSVAGGRSSAS. Asn-1015 and Asn-1144 each carry an N-linked (GlcNAc...) asparagine glycan. Residues 1177-1197 traverse the membrane as a helical segment; it reads GTLVLPAAIAFTLYVVVQAFL. Topologically, residues 1198–1202 are cytoplasmic; it reads PNVPT. Residues 1203–1223 traverse the membrane as a helical segment; that stretch reads PTIPLILLALILGLPGILIVV. Topologically, residues 1224 to 1227 are extracellular; it reads TSRK. A helical transmembrane segment spans residues 1228 to 1248; that stretch reads IAYVGWMLIYLLSLPIWNFVL. Topologically, residues 1249-1609 are cytoplasmic; it reads PLYAYWHMDD…PPGAAPPSFD (361 aa). 2 disordered regions span residues 1354–1381 and 1399–1609; these read PNAM…PSGA and TDAK…PSFD. 2 stretches are compositionally biased toward polar residues: residues 1502–1514 and 1530–1552; these read NVST…TVSE and GSAS…QTRP. Residues 1568-1588 are compositionally biased toward low complexity; sequence AQGVRQVQRGARRSQMPNSAA.

It belongs to the chitin synthase family. Class IV subfamily.

Its subcellular location is the cell membrane. The protein localises to the cytoplasmic vesicle membrane. It carries out the reaction [(1-&gt;4)-N-acetyl-beta-D-glucosaminyl](n) + UDP-N-acetyl-alpha-D-glucosamine = [(1-&gt;4)-N-acetyl-beta-D-glucosaminyl](n+1) + UDP + H(+). Its function is as follows. Polymerizes chitin, a structural polymer of the cell wall and septum, by transferring the sugar moiety of UDP-GlcNAc to the non-reducing end of the growing chitin polymer. The polypeptide is Chitin synthase 5 (Mycosarcoma maydis (Corn smut fungus)).